Here is an 819-residue protein sequence, read N- to C-terminus: Kinesin-like protein KIN-13A (819 aa).

Residues Glu150–Ser178 form a disordered region. Positions Lys199 to Leu535 constitute a Kinesin motor domain. Position 289–296 (Gly289–Thr296) interacts with ATP. Positions Ser534 to Asp729 are disordered. Positions Thr550–Ser562 are enriched in low complexity. Composition is skewed to basic and acidic residues over residues Gln577–Ala589 and Arg614–Asp631. The segment covering Leu632–Leu652 has biased composition (polar residues). Residues Tyr669–Gly686 show a composition bias toward basic and acidic residues. Low complexity predominate over residues Gln697–Arg719. The stretch at Leu736–Val767 forms a coiled coil.

This sequence belongs to the TRAFAC class myosin-kinesin ATPase superfamily. Kinesin family. KIN-13 subfamily. Ubiquitous.

Its subcellular location is the microsome. In Oryza sativa subsp. japonica (Rice), this protein is Kinesin-like protein KIN-13A.